The following is a 258-amino-acid chain: Thiamine thiazole synthase (258 aa).

NAD(+) is bound by residues serine 36, 55 to 56 (ER), glycine 63, valine 127, and 153 to 155 (HVD). 2 residues coordinate Fe cation: aspartate 155 and histidine 170. Residue methionine 224 participates in NAD(+) binding. Residue arginine 234 participates in glycine binding.

The protein belongs to the THI4 family. In terms of assembly, homooctamer; tetramer of dimers. Fe(2+) serves as cofactor.

It catalyses the reaction hydrogen sulfide + glycine + NAD(+) = ADP-5-ethyl-4-methylthiazole-2-carboxylate + nicotinamide + 3 H2O + H(+). It participates in cofactor biosynthesis; thiamine diphosphate biosynthesis. Involved in the biosynthesis of the thiazole moiety of thiamine. Catalyzes the conversion of NAD and glycine to adenosine diphosphate 5-(2-hydroxyethyl)-4-methylthiazole-2-carboxylate (ADT), an adenylated thiazole intermediate, using free sulfide as a source of sulfur. The chain is Thiamine thiazole synthase from Desulfosudis oleivorans (strain DSM 6200 / JCM 39069 / Hxd3) (Desulfococcus oleovorans).